The chain runs to 78 residues: Leukemia-associated protein 1 (78 aa).

Functionally, may act as a tumor suppressor. This chain is Leukemia-associated protein 1 (DLEU1), found in Homo sapiens (Human).